Consider the following 133-residue polypeptide: Large ribosomal subunit protein bL17 (133 aa).

Belongs to the bacterial ribosomal protein bL17 family. As to quaternary structure, part of the 50S ribosomal subunit. Contacts protein L32.

The chain is Large ribosomal subunit protein bL17 from Alteromonas mediterranea (strain DSM 17117 / CIP 110805 / LMG 28347 / Deep ecotype).